Consider the following 288-residue polypeptide: Transmembrane protein 163 (288 aa).

The interval 1–64 (MEPALGSERR…ESGQFSDGLE (64 aa)) is disordered. The Cytoplasmic segment spans residues 1–87 (MEPALGSERR…HEAQNYRKKA (87 aa)). At Ser11 the chain carries Phosphoserine. Residues 12–24 (PPGPGVPRPPPRG) show a composition bias toward pro residues. Low complexity predominate over residues 25 to 42 (HAPSTAAPAPSPAPMSSS). Positions 41-71 (SSVQSDEERQPRISESGQFSDGLEDRGLLES) are required for interaction with MCOLN1. A phosphoserine mark is found at Ser45, Ser54, Ser56, and Ser60. Residues 88–108 (LWVSWLSIIVTLALAVAAFTV) traverse the membrane as a helical segment. Over 109 to 115 (SVMRYSA) the chain is Extracellular. Residues 116 to 136 (SAFGFAFDAILDVLSSAIVLW) traverse the membrane as a helical segment. The Cytoplasmic portion of the chain corresponds to 137 to 149 (RYSNAAAVHSANR). Residues 150 to 170 (EYIACVILGVIFLLSSICIVV) traverse the membrane as a helical segment. At 171–186 (KAIHDLSTRLLPEVDD) the chain is on the extracellular side. A helical transmembrane segment spans residues 187-207 (FLFSVSILSGILCSVLAVLKF). The Cytoplasmic portion of the chain corresponds to 208–216 (MLGKVLTSR). Residues 217–237 (ALITDGFNSLVGGVMGFSILL) form a helical membrane-spanning segment. The Extracellular portion of the chain corresponds to 238–254 (SAEVFKHNAAVWYLDGS). A helical membrane pass occupies residues 255–275 (IGVLIGLTIFAYGVKLLIDMV). Over 276-288 (PRVRQTRHYEMFE) the chain is Cytoplasmic.

This sequence belongs to the TMEM163 family. As to quaternary structure, homodimer. Interacts with MCOLN1. Interacts with SLC30A1, SLC30A2, SLC30A3 and SLC30A4. Widely expressed, with high expression in the brain, cerebellum, heart, lung and spleen. In the brain, mainly expressed in the glutaminergic neuron subpopulations.

It is found in the cytoplasmic vesicle. It localises to the secretory vesicle. Its subcellular location is the synaptic vesicle membrane. The protein localises to the early endosome membrane. The protein resides in the late endosome membrane. It is found in the lysosome membrane. It localises to the cell membrane. The enzyme catalyses Zn(2+)(in) = Zn(2+)(out). Its function is as follows. Zinc ion transporter that mediates zinc efflux and plays a crucial role in intracellular zinc homeostasis. Binds the divalent cations Zn(2+), Ni(2+), and to a minor extent Cu(2+). Is a functional modulator of P2X purinoceptors, including P2RX1, P2RX3, P2RX4 and P2RX7. Plays a role in central nervous system development and is required for myelination, and survival and proliferation of oligodendrocytes. The protein is Transmembrane protein 163 (Tmem163) of Mus musculus (Mouse).